Reading from the N-terminus, the 227-residue chain is Apoptosis regulator OPG045 (227 aa).

Belongs to the orthopoxvirus OPG045 family. In terms of assembly, homodimer. Interacts with host pro-apoptotic protein BCL2L11 (via BH3 domain). Interacts with host NLRP1. Interacts with host BAK.

The protein resides in the host mitochondrion outer membrane. It localises to the host cytoplasm. In terms of biological role, plays a role in evading host innate immune response by inhibiting host inflammasome activation. Interacts with and inhibits NLR-mediated interleukin-1 beta/IL1B production in infected cells. At the host mitochondria outer membrane, interacts with the BH3 domain of host BAK and prevents BAK from binding active BAX. In turn, host apoptosis is inhibited. The polypeptide is Apoptosis regulator OPG045 (OPG045) (Oryctolagus cuniculus (Rabbit)).